Here is a 421-residue protein sequence, read N- to C-terminus: Medium-chain specific acyl-CoA dehydrogenase, mitochondrial (421 aa).

A mitochondrion-targeting transit peptide spans 1–25 (MAAGFGRCCRVLRSISRFQWRSQHT). Lysine 69 carries the N6-acetyllysine; alternate modification. Residue lysine 69 is modified to N6-succinyllysine; alternate. An FAD-binding site is contributed by 158-167 (YCVTEPGAGS). Residue serine 167 participates in octanoyl-CoA binding. Lysine 179 bears the N6-succinyllysine mark. 191 to 193 (WIT) lines the FAD pocket. Lysine 212, lysine 217, and lysine 271 each carry N6-acetyllysine; alternate. N6-succinyllysine; alternate is present on residues lysine 212, lysine 217, and lysine 271. Aspartate 278 contributes to the octanoyl-CoA binding site. The residue at position 279 (lysine 279) is an N6-acetyllysine. Position 281 (arginine 281) interacts with octanoyl-CoA. At lysine 301 the chain carries N6-acetyllysine. FAD is bound by residues 306–308 (RKT) and 316–317 (HQ). The octanoyl-CoA site is built by arginine 349 and threonine 351. At threonine 351 the chain carries Phosphothreonine. FAD is bound at residue 374–378 (QILGG). Glutamate 401 contributes to the octanoyl-CoA binding site. The active-site Proton acceptor is glutamate 401. 402–405 (GTSQ) contacts FAD.

It belongs to the acyl-CoA dehydrogenase family. Homotetramer. Interacts with the heterodimeric electron transfer flavoprotein ETF. FAD serves as cofactor. Post-translationally, acetylated. Could occur at proximity of the cofactor-binding sites and reduce the catalytic activity. Could be deacetylated by SIRT3.

It is found in the mitochondrion matrix. It catalyses the reaction a medium-chain 2,3-saturated fatty acyl-CoA + oxidized [electron-transfer flavoprotein] + H(+) = a medium-chain (2E)-enoyl-CoA + reduced [electron-transfer flavoprotein]. It carries out the reaction pentanoyl-CoA + oxidized [electron-transfer flavoprotein] + H(+) = (2E)-pentenoyl-CoA + reduced [electron-transfer flavoprotein]. The catalysed reaction is hexanoyl-CoA + oxidized [electron-transfer flavoprotein] + H(+) = (2E)-hexenoyl-CoA + reduced [electron-transfer flavoprotein]. The enzyme catalyses octanoyl-CoA + oxidized [electron-transfer flavoprotein] + H(+) = (2E)-octenoyl-CoA + reduced [electron-transfer flavoprotein]. It catalyses the reaction decanoyl-CoA + oxidized [electron-transfer flavoprotein] + H(+) = (2E)-decenoyl-CoA + reduced [electron-transfer flavoprotein]. It carries out the reaction dodecanoyl-CoA + oxidized [electron-transfer flavoprotein] + H(+) = (2E)-dodecenoyl-CoA + reduced [electron-transfer flavoprotein]. The catalysed reaction is tetradecanoyl-CoA + oxidized [electron-transfer flavoprotein] + H(+) = (2E)-tetradecenoyl-CoA + reduced [electron-transfer flavoprotein]. The enzyme catalyses oxidized [electron-transfer flavoprotein] + hexadecanoyl-CoA + H(+) = (2E)-hexadecenoyl-CoA + reduced [electron-transfer flavoprotein]. It functions in the pathway lipid metabolism; mitochondrial fatty acid beta-oxidation. Medium-chain specific acyl-CoA dehydrogenase is one of the acyl-CoA dehydrogenases that catalyze the first step of mitochondrial fatty acid beta-oxidation, an aerobic process breaking down fatty acids into acetyl-CoA and allowing the production of energy from fats. The first step of fatty acid beta-oxidation consists in the removal of one hydrogen from C-2 and C-3 of the straight-chain fatty acyl-CoA thioester, resulting in the formation of trans-2-enoyl-CoA. Electron transfer flavoprotein (ETF) is the electron acceptor that transfers electrons to the main mitochondrial respiratory chain via ETF-ubiquinone oxidoreductase (ETF dehydrogenase). Among the different mitochondrial acyl-CoA dehydrogenases, medium-chain specific acyl-CoA dehydrogenase acts specifically on acyl-CoAs with saturated 6 to 12 carbons long primary chains. This is Medium-chain specific acyl-CoA dehydrogenase, mitochondrial from Pan troglodytes (Chimpanzee).